The primary structure comprises 342 residues: NADH-quinone oxidoreductase subunit H 1 (342 aa).

Transmembrane regions (helical) follow at residues 7-27, 78-98, 120-140, 166-186, 193-213, 245-265, 284-304, and 322-342; these read FLLE…VIAM, ALFI…GAVI, IGVL…MIGG, MGLS…GEIV, WWNI…SFAE, LFAE…FYFG, ILGT…FMWV, and KIMI…ILLF.

This sequence belongs to the complex I subunit 1 family. As to quaternary structure, NDH-1 is composed of 14 different subunits. Subunits NuoA, H, J, K, L, M, N constitute the membrane sector of the complex.

The protein resides in the cell inner membrane. The enzyme catalyses a quinone + NADH + 5 H(+)(in) = a quinol + NAD(+) + 4 H(+)(out). In terms of biological role, NDH-1 shuttles electrons from NADH, via FMN and iron-sulfur (Fe-S) centers, to quinones in the respiratory chain. The immediate electron acceptor for the enzyme in this species is believed to be ubiquinone. Couples the redox reaction to proton translocation (for every two electrons transferred, four hydrogen ions are translocated across the cytoplasmic membrane), and thus conserves the redox energy in a proton gradient. This subunit may bind ubiquinone. The sequence is that of NADH-quinone oxidoreductase subunit H 1 from Cytophaga hutchinsonii (strain ATCC 33406 / DSM 1761 / CIP 103989 / NBRC 15051 / NCIMB 9469 / D465).